The sequence spans 146 residues: U1 small nuclear ribonucleoprotein C (146 aa).

The Matrin-type zinc-finger motif lies at tyrosine 4–phenylalanine 36. Positions asparagine 64–methionine 96 are disordered. Pro residues predominate over residues serine 73–methionine 96.

The protein belongs to the U1 small nuclear ribonucleoprotein C family. U1 snRNP is composed of the 7 core Sm proteins B/B', D1, D2, D3, E, F and G that assemble in a heptameric protein ring on the Sm site of the small nuclear RNA to form the core snRNP, and at least 3 U1 snRNP-specific proteins U1-70K, U1-A and U1-C. U1-C interacts with U1 snRNA and the 5' splice-site region of the pre-mRNA.

Its subcellular location is the nucleus. Its function is as follows. Component of the spliceosomal U1 snRNP, which is essential for recognition of the pre-mRNA 5' splice-site and the subsequent assembly of the spliceosome. U1-C is directly involved in initial 5' splice-site recognition for both constitutive and regulated alternative splicing. The interaction with the 5' splice-site seems to precede base-pairing between the pre-mRNA and the U1 snRNA. Stimulates commitment or early (E) complex formation by stabilizing the base pairing of the 5' end of the U1 snRNA and the 5' splice-site region. This Drosophila pseudoobscura pseudoobscura (Fruit fly) protein is U1 small nuclear ribonucleoprotein C.